A 388-amino-acid chain; its full sequence is Succinate--CoA ligase [ADP-forming] subunit beta (388 aa).

Residues 9–236 (KKLFAEHGVP…VAAVDPLEQK (228 aa)) enclose the ATP-grasp domain. Residues Lys-45, 52–54 (GRG), Glu-91, Ser-94, and Glu-99 each bind ATP. Residues Asn-191 and Asp-205 each coordinate Mg(2+). Residues Asn-256 and 318-320 (GIT) each bind substrate.

The protein belongs to the succinate/malate CoA ligase beta subunit family. In terms of assembly, heterotetramer of two alpha and two beta subunits. Requires Mg(2+) as cofactor.

It carries out the reaction succinate + ATP + CoA = succinyl-CoA + ADP + phosphate. It catalyses the reaction GTP + succinate + CoA = succinyl-CoA + GDP + phosphate. It participates in carbohydrate metabolism; tricarboxylic acid cycle; succinate from succinyl-CoA (ligase route): step 1/1. Succinyl-CoA synthetase functions in the citric acid cycle (TCA), coupling the hydrolysis of succinyl-CoA to the synthesis of either ATP or GTP and thus represents the only step of substrate-level phosphorylation in the TCA. The beta subunit provides nucleotide specificity of the enzyme and binds the substrate succinate, while the binding sites for coenzyme A and phosphate are found in the alpha subunit. In Frankia casuarinae (strain DSM 45818 / CECT 9043 / HFP020203 / CcI3), this protein is Succinate--CoA ligase [ADP-forming] subunit beta.